The sequence spans 103 residues: Large ribosomal subunit protein bL21 (103 aa).

This sequence belongs to the bacterial ribosomal protein bL21 family. Part of the 50S ribosomal subunit. Contacts protein L20.

Its function is as follows. This protein binds to 23S rRNA in the presence of protein L20. The polypeptide is Large ribosomal subunit protein bL21 (Kocuria rhizophila (strain ATCC 9341 / DSM 348 / NBRC 103217 / DC2201)).